A 261-amino-acid chain; its full sequence is Putative outer membrane protein TC_0650 (261 aa).

Residues 1 to 17 (MRFLFAFILLCSPWVSE) form the signal peptide.

Its subcellular location is the cell outer membrane. The sequence is that of Putative outer membrane protein TC_0650 from Chlamydia muridarum (strain MoPn / Nigg).